A 173-amino-acid chain; its full sequence is Ribosome maturation factor RimM (173 aa).

In terms of domain architecture, PRC barrel spans 95–169 (EGSYYFKDIL…RIEVTLLEGL (75 aa)).

It belongs to the RimM family. Binds ribosomal protein uS19.

It localises to the cytoplasm. An accessory protein needed during the final step in the assembly of 30S ribosomal subunit, possibly for assembly of the head region. Essential for efficient processing of 16S rRNA. May be needed both before and after RbfA during the maturation of 16S rRNA. It has affinity for free ribosomal 30S subunits but not for 70S ribosomes. This is Ribosome maturation factor RimM from Lactobacillus gasseri (strain ATCC 33323 / DSM 20243 / BCRC 14619 / CIP 102991 / JCM 1131 / KCTC 3163 / NCIMB 11718 / NCTC 13722 / AM63).